We begin with the raw amino-acid sequence, 134 residues long: Glycine cleavage system H protein (134 aa).

In terms of domain architecture, Lipoyl-binding spans 24–106; the sequence is TVRVGITDYA…YGAGWLLDIQ (83 aa). An N6-lipoyllysine modification is found at Lys-65.

Belongs to the GcvH family. As to quaternary structure, the glycine cleavage system is composed of four proteins: P, T, L and H. The cofactor is (R)-lipoate.

The glycine cleavage system catalyzes the degradation of glycine. The H protein shuttles the methylamine group of glycine from the P protein to the T protein. This Mycobacterium tuberculosis (strain ATCC 25177 / H37Ra) protein is Glycine cleavage system H protein.